The primary structure comprises 272 residues: DNA repair protein RecO (272 aa).

The protein belongs to the RecO family.

Functionally, involved in DNA repair and RecF pathway recombination. This chain is DNA repair protein RecO, found in Latilactobacillus sakei subsp. sakei (strain 23K) (Lactobacillus sakei subsp. sakei).